Here is a 142-residue protein sequence, read N- to C-terminus: Large ribosomal subunit protein uL13 (142 aa).

It belongs to the universal ribosomal protein uL13 family. As to quaternary structure, part of the 50S ribosomal subunit.

In terms of biological role, this protein is one of the early assembly proteins of the 50S ribosomal subunit, although it is not seen to bind rRNA by itself. It is important during the early stages of 50S assembly. This chain is Large ribosomal subunit protein uL13, found in Cellvibrio japonicus (strain Ueda107) (Pseudomonas fluorescens subsp. cellulosa).